A 575-amino-acid polypeptide reads, in one-letter code: Muellerian-inhibiting factor (575 aa).

A signal peptide spans 1–20 (MQGPSLSQLVLVLMGALLEA). Positions 21–466 (GTPREEVSST…ERSGPARAQR (446 aa)) are excised as a propeptide. Residues N78 and N343 are each glycosylated (N-linked (GlcNAc...) asparagine). Cystine bridges form between C477–C541, C503–C572, and C507–C574.

It belongs to the TGF-beta family. In terms of assembly, homodimer; disulfide-linked. In terms of processing, preproprotein is proteolytically processed to generate N- and C-terminal cleavage products that homodimerize and associate to form a biologically active non-covalent complex. Binding of the non-covalent complex to AMHR2 induces dissociation of the pro-region from the mature C-terminal dimer. The N-terminal portion of the protein, despite having no intrinsic activity, has the role of amplifying the activity of the C-terminus. As to expression, detected in fetal Sertoli cells. Expressed in granulosa cells of growing follicles but also in theca cells of preovulatory follicles and corpora lutea (at protein level).

The protein resides in the secreted. In terms of biological role, plays an important role in several reproductive functions. Induces Muellerian duct regression during male fetal sexual differentiation and plays a role in Leydig cell differentiation and function. In female acts as a negative regulator of the primordial to primary follicle transition and decreases FSH sensitivity of growing follicles. AMH signals by binding to a specific type-II receptor, AMHR2, that heterodimerizes with type-I receptors (ACVR1 and BMPR1A), and recruiting SMAD proteins that are translocated to the nucleus to regulate target gene expression. This Sus scrofa (Pig) protein is Muellerian-inhibiting factor (AMH).